We begin with the raw amino-acid sequence, 217 residues long: Ribosomal RNA large subunit methyltransferase E (217 aa).

Positions 71, 73, 91, 107, and 132 each coordinate S-adenosyl-L-methionine. K172 serves as the catalytic Proton acceptor.

The protein belongs to the class I-like SAM-binding methyltransferase superfamily. RNA methyltransferase RlmE family.

The protein localises to the cytoplasm. The enzyme catalyses uridine(2552) in 23S rRNA + S-adenosyl-L-methionine = 2'-O-methyluridine(2552) in 23S rRNA + S-adenosyl-L-homocysteine + H(+). Its function is as follows. Specifically methylates the uridine in position 2552 of 23S rRNA at the 2'-O position of the ribose in the fully assembled 50S ribosomal subunit. This Psychromonas ingrahamii (strain DSM 17664 / CCUG 51855 / 37) protein is Ribosomal RNA large subunit methyltransferase E.